We begin with the raw amino-acid sequence, 55 residues long: Ribosome modulation factor (55 aa).

The protein belongs to the ribosome modulation factor family. As to quaternary structure, associates exclusively with 100S ribosomes.

The protein localises to the cytoplasm. In terms of biological role, during stationary phase, converts 70S ribosomes to an inactive dimeric form (100S ribosomes). May form immature 90S particles, which are converted to mature 100S ribosomes by the hibernation promoting factor Hpf. The sequence is that of Ribosome modulation factor from Escherichia coli O157:H7.